A 417-amino-acid polypeptide reads, in one-letter code: V-set and immunoglobulin domain-containing protein 8 (417 aa).

Positions 1–21 (MGVRGALHLLLVCLSPALLSA) are cleaved as a signal peptide. Ig-like V-type domains lie at 22 to 140 (VRIN…VIVT) and 145 to 256 (PAVP…VKVS). Residues 22–262 (VRINGDGQEV…VKVSDSQRVG (241 aa)) lie on the Extracellular side of the membrane. 2 disulfides stabilise this stretch: Cys44-Cys125 and Cys166-Cys238. The helical transmembrane segment at 263-283 (MIVGAVLGSLLMLACLALGIW) threads the bilayer. At 284-417 (GLICCCCGGG…QRSCKDGLLV (134 aa)) the chain is on the cytoplasmic side.

It is found in the membrane. The protein is V-set and immunoglobulin domain-containing protein 8 (Vsig8) of Mus musculus (Mouse).